Reading from the N-terminus, the 201-residue chain is Probable nicotinate-nucleotide adenylyltransferase (201 aa).

It belongs to the NadD family.

It carries out the reaction nicotinate beta-D-ribonucleotide + ATP + H(+) = deamido-NAD(+) + diphosphate. It participates in cofactor biosynthesis; NAD(+) biosynthesis; deamido-NAD(+) from nicotinate D-ribonucleotide: step 1/1. Catalyzes the reversible adenylation of nicotinate mononucleotide (NaMN) to nicotinic acid adenine dinucleotide (NaAD). The sequence is that of Probable nicotinate-nucleotide adenylyltransferase from Bacteroides fragilis (strain YCH46).